We begin with the raw amino-acid sequence, 318 residues long: Glycine--tRNA ligase alpha subunit (318 aa).

The protein belongs to the class-II aminoacyl-tRNA synthetase family. As to quaternary structure, tetramer of two alpha and two beta subunits.

It localises to the cytoplasm. The enzyme catalyses tRNA(Gly) + glycine + ATP = glycyl-tRNA(Gly) + AMP + diphosphate. This Moraxella catarrhalis (Branhamella catarrhalis) protein is Glycine--tRNA ligase alpha subunit (glyQ).